The primary structure comprises 146 residues: Hemoglobin subunit beta (146 aa).

Residue Val1 is modified to N-acetylvaline. Residues 2-146 enclose the Globin domain; it reads HLSSEEKGLI…VANALAHKYH (145 aa). Thr12 carries the phosphothreonine modification. Position 59 is an N6-acetyllysine (Lys59). His63 provides a ligand contact to heme b. The residue at position 82 (Lys82) is an N6-acetyllysine. His92 lines the heme b pocket. Cys93 bears the S-nitrosocysteine mark. The residue at position 144 (Lys144) is an N6-acetyllysine.

Belongs to the globin family. As to quaternary structure, heterotetramer of two alpha chains and two beta chains. Red blood cells.

Functionally, involved in oxygen transport from the lung to the various peripheral tissues. This Potorous tridactylus (Potoroo) protein is Hemoglobin subunit beta (HBB).